Reading from the N-terminus, the 441-residue chain is Xaa-Pro dipeptidase (441 aa).

Residues D244, D255, H336, E381, and E420 each contribute to the Mn(2+) site.

It belongs to the peptidase M24B family. Bacterial-type prolidase subfamily. Mn(2+) is required as a cofactor.

The catalysed reaction is Xaa-L-Pro dipeptide + H2O = an L-alpha-amino acid + L-proline. Its function is as follows. Splits dipeptides with a prolyl residue in the C-terminal position. The chain is Xaa-Pro dipeptidase from Xanthomonas campestris pv. campestris (strain B100).